The primary structure comprises 359 residues: Glucose 1-dehydrogenase (359 aa).

Cysteine 39 serves as a coordination point for Zn(2+). Residue threonine 41 coordinates substrate. Zn(2+) is bound by residues histidine 64 and glutamate 65. Substrate is bound by residues glutamate 116 and glutamate 152. Glutamate 152 serves as a coordination point for Zn(2+). Position 183–186 (183–186 (AGPI)) interacts with NADP(+).

This sequence belongs to the zinc-containing alcohol dehydrogenase family. Glucose 1-dehydrogenase subfamily. Requires Zn(2+) as cofactor.

The enzyme catalyses D-glucose + NAD(+) = D-glucono-1,5-lactone + NADH + H(+). It catalyses the reaction D-glucose + NADP(+) = D-glucono-1,5-lactone + NADPH + H(+). In terms of biological role, catalyzes the NAD(P)(+)-dependent oxidation of D-glucose to D-gluconate via gluconolactone. Can utilize both NAD(+) and NADP(+) as electron acceptor. Is involved in the degradation of glucose through a non-phosphorylative variant of the Entner-Doudoroff pathway. This chain is Glucose 1-dehydrogenase, found in Methanocella arvoryzae (strain DSM 22066 / NBRC 105507 / MRE50).